The sequence spans 324 residues: Beta-ketoacyl-[acyl-carrier-protein] synthase III (324 aa).

Residues cysteine 112 and histidine 249 contribute to the active site. The segment at 250–254 (QANIR) is ACP-binding. Asparagine 279 is an active-site residue.

It belongs to the thiolase-like superfamily. FabH family. In terms of assembly, homodimer.

It localises to the cytoplasm. It carries out the reaction malonyl-[ACP] + acetyl-CoA + H(+) = 3-oxobutanoyl-[ACP] + CO2 + CoA. It participates in lipid metabolism; fatty acid biosynthesis. Catalyzes the condensation reaction of fatty acid synthesis by the addition to an acyl acceptor of two carbons from malonyl-ACP. Catalyzes the first condensation reaction which initiates fatty acid synthesis and may therefore play a role in governing the total rate of fatty acid production. Possesses both acetoacetyl-ACP synthase and acetyl transacylase activities. Its substrate specificity determines the biosynthesis of branched-chain and/or straight-chain of fatty acids. This is Beta-ketoacyl-[acyl-carrier-protein] synthase III from Streptococcus sanguinis (strain SK36).